A 121-amino-acid chain; its full sequence is Large ribosomal subunit protein eL18 (121 aa).

It belongs to the eukaryotic ribosomal protein eL18 family. Part of the 50S ribosomal subunit.

In Thermococcus kodakarensis (strain ATCC BAA-918 / JCM 12380 / KOD1) (Pyrococcus kodakaraensis (strain KOD1)), this protein is Large ribosomal subunit protein eL18.